Here is a 101-residue protein sequence, read N- to C-terminus: ATP-dependent Clp protease adapter protein ClpS (101 aa).

A disordered region spans residues 1 to 24 (MVVASAPAKPGSVGQQESASRDAT). Residues 13–23 (VGQQESASRDA) show a composition bias toward polar residues.

It belongs to the ClpS family. Binds to the N-terminal domain of the chaperone ClpA.

Functionally, involved in the modulation of the specificity of the ClpAP-mediated ATP-dependent protein degradation. The sequence is that of ATP-dependent Clp protease adapter protein ClpS from Mycobacterium marinum (strain ATCC BAA-535 / M).